Reading from the N-terminus, the 569-residue chain is Cysteine--tRNA ligase CPS1 homolog, chloroplastic/mitochondrial (569 aa).

A chloroplast and mitochondrion-targeting transit peptide spans 1-42 (MAAARRAAGLLPLLLSSPSRARLPHRQALALTPPLLRPHRLY). A Zn(2+)-binding site is contributed by C99. A 'HIGH' region motif is present at residues 101–111 (VTPYDDSHIGH). 3 residues coordinate Zn(2+): C279, H304, and E308. A 'KMSKS' region motif is present at residues 336 to 340 (KMSKS). K339 serves as a coordination point for ATP.

The protein belongs to the class-I aminoacyl-tRNA synthetase family. Requires Zn(2+) as cofactor.

It localises to the plastid. The protein localises to the chloroplast. It is found in the mitochondrion. It catalyses the reaction tRNA(Cys) + L-cysteine + ATP = L-cysteinyl-tRNA(Cys) + AMP + diphosphate. Nuclear genome-encoded factor required for normal assembly of chloroplast polysomes. The protein is Cysteine--tRNA ligase CPS1 homolog, chloroplastic/mitochondrial of Oryza sativa subsp. japonica (Rice).